The primary structure comprises 270 residues: F-actin-capping protein subunit beta (270 aa).

Residues 245–258 (QTRSQKSTTDSQEQ) are compositionally biased toward polar residues. Residues 245–270 (QTRSQKSTTDSQEQQQKEVIKGLQNL) form a disordered region.

This sequence belongs to the F-actin-capping protein beta subunit family. As to quaternary structure, component of the F-actin capping complex, composed of a heterodimer of an alpha and a beta subunit.

Its subcellular location is the cytoplasm. It localises to the cytoskeleton. The protein resides in the actin patch. F-actin-capping proteins bind in a Ca(2+)-independent manner to the fast growing ends of actin filaments (barbed end) thereby blocking the exchange of subunits at these ends. Unlike other capping proteins (such as gelsolin and severin), these proteins do not sever actin filaments. This Candida glabrata (strain ATCC 2001 / BCRC 20586 / JCM 3761 / NBRC 0622 / NRRL Y-65 / CBS 138) (Yeast) protein is F-actin-capping protein subunit beta (CAP2).